A 192-amino-acid chain; its full sequence is ADP-ribose glycohydrolase AF_1521 (192 aa).

The Macro domain maps to 1-192; the sequence is MEVLFEAKVG…VALKVFERSL (192 aa). Residues 19-21, 32-34, 39-44, and 140-146 each bind substrate; these read GDI, AAN, HGGGVA, and VSAGIYG.

It carries out the reaction 5-O-(ADP-D-ribosyl)-L-glutamyl-[protein] + H2O = L-glutamyl-[protein] + ADP-D-ribose + H(+). The catalysed reaction is 4-O-(ADP-D-ribosyl)-L-aspartyl-[protein] + H2O = L-aspartyl-[protein] + ADP-D-ribose + H(+). It catalyses the reaction alpha-NAD(+) + H2O = ADP-D-ribose + nicotinamide + H(+). Removes ADP-ribose from aspartate and glutamate residues in proteins bearing a single ADP-ribose moiety. Inactive towards proteins bearing poly-ADP-ribose. Catalyzes removal of a phosphate group from ADP-ribose 1''-phosphate (Appr1p), but with low efficiency. This is ADP-ribose glycohydrolase AF_1521 from Archaeoglobus fulgidus (strain ATCC 49558 / DSM 4304 / JCM 9628 / NBRC 100126 / VC-16).